Consider the following 541-residue polypeptide: Man(5)GlcNAc(2)-PP-dolichol translocation protein RFT1 (541 aa).

11 helical membrane passes run 16–36, 45–62, 85–105, 123–143, 154–176, 187–207, 335–355, 376–396, 414–434, 470–490, and 499–519; these read SGLLLQVLFRLITFVLNAFIL, GIVNVRLTLLYSTTTFLA, LLWLTVPLGIFWSSCLGWVWL, VLFFGLSAVVELLGEPFWVLA, LAESMSVILRSVLTALLVLWLPH, LLYTTVLVLCYAIYLIQLLRS, LALLTGLTMTVFGFAYSQLAL, CLYVLLLAINGVTECFMFAAM, SFLVLSYLLTSWCGSVGFIMA, VLLGVFILSAGITSVSEAFLC, and LAHIAVGTICLGVTLGTAFLT.

The protein belongs to the RFT1 family.

The protein localises to the endoplasmic reticulum membrane. It participates in protein modification; protein glycosylation. Intramembrane glycolipid transporter that operates in the biosynthetic pathway of dolichol-linked oligosaccharides, the glycan precursors employed in protein asparagine (N)-glycosylation. The sequential addition of sugars to dolichol pyrophosphate produces dolichol-linked oligosaccharides containing fourteen sugars, including two GlcNAcs, nine mannoses and three glucoses. Once assembled, the oligosaccharide is transferred from the lipid to nascent proteins by oligosaccharyltransferases. The assembly of dolichol-linked oligosaccharides begins on the cytosolic side of the endoplasmic reticulum membrane and finishes in its lumen. RFT1 could mediate the translocation of the cytosolically oriented intermediate DolPP-GlcNAc2Man5, produced by ALG11, into the ER lumen where dolichol-linked oligosaccharides assembly continues. However, the intramembrane lipid transporter activity could not be confirmed in vitro. This is Man(5)GlcNAc(2)-PP-dolichol translocation protein RFT1 from Mus musculus (Mouse).